We begin with the raw amino-acid sequence, 1941 residues long: Integrin beta-like protein B (1941 aa).

The N-terminal stretch at 1–20 is a signal peptide; it reads MKNIIKYLFIFLCFLIITEA. Residues 21-1871 lie on the Extracellular side of the membrane; it reads THFRYGTISW…VTTQNSSNKT (1851 aa). Residues 420-457 enclose the EGF-like domain; that stretch reads YGDKCTVLPPCKNGVPNGGVNGDGKCLCNNGWTGSDCS. Intrachain disulfides connect cysteine 430–cysteine 445 and cysteine 447–cysteine 456. The 184-residue stretch at 513-696 folds into the VWFA domain; sequence DVYLLVDANM…AGIKAVSSKL (184 aa). N-linked (GlcNAc...) asparagine glycosylation is found at asparagine 1400, asparagine 1505, asparagine 1530, asparagine 1606, asparagine 1652, asparagine 1738, asparagine 1777, asparagine 1848, asparagine 1866, and asparagine 1869. The helical transmembrane segment at 1872–1892 threads the bilayer; sequence VLSGAIAGAAAGTALIAAAMW. Residues 1893-1941 are Cytoplasmic-facing; the sequence is KMLRKAAPPTDAFFDEGAFLGDGVNSNPMYQESKNGGENPLYLASNETL. The interval 1921 to 1941 is disordered; it reads MYQESKNGGENPLYLASNETL.

This sequence belongs to the SIB family. As to quaternary structure, interacts with talA/talin.

The protein localises to the membrane. Functionally, implicated in cellular adhesion. This is Integrin beta-like protein B (sibB) from Dictyostelium discoideum (Social amoeba).